We begin with the raw amino-acid sequence, 164 residues long: MSEPSRDAHQIPHGSKACRRLFGPVDSEQLRRDCDALMAGCVQEARERWNFDFVTETPLEGDFAWERVWGLGLPKLYLPAGPRGGRDDLGGGKRPSTSSTLLPGTAREDHLDLSLSCTLMPHSPERPEASPGAPGTSQGRKRRQTSMTDFYHSKRRLIFSKRKP.

N-acetylserine is present on Ser2. A Glycyl serine ester (Ser-Gly) (interchain with G-Cter in ubiquitin) cross-link involves residue Ser2. Residues 13-41 (HGSKACRRLFGPVDSEQLRRDCDALMAGC) form a C4-type zinc finger. Residues 17–24 (ACRRLFGP) are required for binding cyclins. Residues 53–58 (FVTETP) are required for binding CDKs. The disordered stretch occupies residues 80–164 (AGPRGGRDDL…RRLIFSKRKP (85 aa)). At Ser114 the chain carries Phosphoserine; by GSK3-beta. A Phosphoserine modification is found at Ser130. The PIP-box K+4 motif signature appears at 140–164 (RKRRQTSMTDFYHSKRRLIFSKRKP). The Nuclear localization signal motif lies at 141-156 (KRRQTSMTDFYHSKRR). Phosphothreonine; by PKA, PKB/AKT1, PIM1 and PIM2 is present on Thr145. A Phosphoserine; by PKC and NUAK1 modification is found at Ser146. Positions 152–164 (HSKRRLIFSKRKP) are interaction with TRIM39. Basic residues predominate over residues 153–164 (SKRRLIFSKRKP). Residue Ser160 is modified to Phosphoserine.

This sequence belongs to the CDI family. Interacts with HDAC1; the interaction is prevented by competitive binding of C10orf90/FATS to HDAC1 facilitating acetylation and protein stabilization of CDKN1A/p21. Interacts with MKRN1. Interacts with PSMA3. Interacts with PCNA. Component of the ternary complex, cyclin D-CDK4-CDKN1A. Interacts (via its N-terminal domain) with CDK4; the interaction promotes the assembly of the cyclin D-CDK4 complex, its nuclear translocation and promotes the cyclin D-dependent enzyme activity of CDK4. Binding to CDK2 leads to CDK2/cyclin E inactivation at the G1-S phase DNA damage checkpoint, thereby arresting cells at the G1-S transition during DNA repair. Interacts with PIM1. Interacts with STK11 and NUAK1. Interacts with DTL and TRIM39. Interacts with PKP3; the interaction sequesters CDKN1A to the cytoplasm thereby repressing its role as an inhibitor of CDK4- and CDK6-driven RB1 phosphorylation. Phosphorylation of Thr-145 by Akt or of Ser-146 by PKC impairs binding to PCNA. Phosphorylation at Ser-114 by GSK3-beta enhances ubiquitination by the DCX(DTL) complex. Phosphorylation of Thr-145 by PIM2 enhances protein stability and inhibits cell proliferation. Phosphorylation of Thr-145 by PIM1 results in the relocation of CDKN1A to the cytoplasm and enhanced CDKN1A protein stability. UV radiation-induced phosphorylation at Ser-146 by NUAK1 leads to its degradation. Post-translationally, ubiquitinated by MKRN1; leading to polyubiquitination and 26S proteasome-dependent degradation. Ubiquitinated by the DCX(DTL) complex, also named CRL4(CDT2) complex, leading to its degradation during S phase or following UV irradiation. Ubiquitination by the DCX(DTL) complex is essential to control replication licensing and is PCNA-dependent: interacts with PCNA via its PIP-box, while the presence of the containing the 'K+4' motif in the PIP box, recruit the DCX(DTL) complex, leading to its degradation. Ubiquitination at Ser-2 leads to degradation by the proteasome pathway. Ubiquitinated by RNF114; leading to proteasomal degradation. In terms of processing, acetylation leads to protein stability. Acetylated in vitro on Lys-141, Lys-154, Lys-161 and Lys-163. Deacetylation by HDAC1 is prevented by competitive binding of C10orf90/FATS to HDAC1.

It is found in the cytoplasm. The protein localises to the nucleus. In terms of biological role, may be involved in p53/TP53 mediated inhibition of cellular proliferation in response to DNA damage. Binds to and inhibits cyclin-dependent kinase activity, preventing phosphorylation of critical cyclin-dependent kinase substrates and blocking cell cycle progression. Functions in the nuclear localization and assembly of cyclin D-CDK4 complex and promotes its kinase activity towards RB1. At higher stoichiometric ratios, inhibits the kinase activity of the cyclin D-CDK4 complex. Inhibits DNA synthesis by DNA polymerase delta by competing with POLD3 for PCNA binding. Plays an important role in controlling cell cycle progression and DNA damage-induced G2 arrest. Negatively regulates the CDK4- and CDK6-driven phosphorylation of RB1 in keratinocytes, thereby resulting in the release of E2F1 and subsequent transcription of E2F1-driven G1/S phase promoting genes. In Felis catus (Cat), this protein is Cyclin-dependent kinase inhibitor 1 (CDKN1A).